A 342-amino-acid polypeptide reads, in one-letter code: NAD kinase (342 aa).

Catalysis depends on Asp66, which acts as the Proton acceptor. NAD(+) is bound by residues 66–67 (DG), Arg71, 141–142 (ND), Lys152, Asp171, 182–187 (TAYAFS), and Ala206.

This sequence belongs to the NAD kinase family. Requires a divalent metal cation as cofactor.

It is found in the cytoplasm. The catalysed reaction is NAD(+) + ATP = ADP + NADP(+) + H(+). Involved in the regulation of the intracellular balance of NAD and NADP, and is a key enzyme in the biosynthesis of NADP. Catalyzes specifically the phosphorylation on 2'-hydroxyl of the adenosine moiety of NAD to yield NADP. This Bifidobacterium longum (strain NCC 2705) protein is NAD kinase.